Reading from the N-terminus, the 396-residue chain is Lipid-A-disaccharide synthase (396 aa).

The protein belongs to the LpxB family.

It catalyses the reaction a lipid X + a UDP-2-N,3-O-bis[(3R)-3-hydroxyacyl]-alpha-D-glucosamine = a lipid A disaccharide + UDP + H(+). The protein operates within bacterial outer membrane biogenesis; LPS lipid A biosynthesis. Its function is as follows. Condensation of UDP-2,3-diacylglucosamine and 2,3-diacylglucosamine-1-phosphate to form lipid A disaccharide, a precursor of lipid A, a phosphorylated glycolipid that anchors the lipopolysaccharide to the outer membrane of the cell. The polypeptide is Lipid-A-disaccharide synthase (Acinetobacter baylyi (strain ATCC 33305 / BD413 / ADP1)).